Reading from the N-terminus, the 232-residue chain is MSYTTPTYTASVSNDILRYMMAYATGNDGCIQSMSALFQSSGESIIAYNVSASSTTQAGFFFQLQNVPQGIGVQIVFFSTTIPQNTFFIDLRFTTTQGNTYQLAQVNTLPPNTNYALVIIVSLTITVQPASNVNISPLLQAFTSFASNQCATAQPPSLSYTGNGFTVFYENTYTSGITFNAILIAQNTLTSSNTIQITATINGNVVATATISTPALGYAYFLFTLTLVFTSE.

A helical membrane pass occupies residues 209 to 229 (ATISTPALGYAYFLFTLTLVF).

It is found in the host membrane. This is an uncharacterized protein from Saccharolobus islandicus (Sulfolobus islandicus).